A 245-amino-acid chain; its full sequence is 6-carboxyhexanoate--CoA ligase (245 aa).

The protein belongs to the BioW family. In terms of assembly, homodimer. The cofactor is Mg(2+).

The catalysed reaction is heptanedioate + ATP + CoA = 6-carboxyhexanoyl-CoA + AMP + diphosphate. It functions in the pathway metabolic intermediate metabolism; pimeloyl-CoA biosynthesis; pimeloyl-CoA from pimelate: step 1/1. Its function is as follows. Catalyzes the transformation of pimelate into pimeloyl-CoA with concomitant hydrolysis of ATP to AMP. This is 6-carboxyhexanoate--CoA ligase from Sulfurihydrogenibium sp. (strain YO3AOP1).